Consider the following 307-residue polypeptide: Elongation factor Ts (307 aa).

The involved in Mg(2+) ion dislocation from EF-Tu stretch occupies residues 80-83 (TDFV).

Belongs to the EF-Ts family.

It localises to the cytoplasm. Its function is as follows. Associates with the EF-Tu.GDP complex and induces the exchange of GDP to GTP. It remains bound to the aminoacyl-tRNA.EF-Tu.GTP complex up to the GTP hydrolysis stage on the ribosome. The protein is Elongation factor Ts of Rhodospirillum centenum (strain ATCC 51521 / SW).